The following is a 139-amino-acid chain: D-ribose pyranase (139 aa).

The active-site Proton donor is the His-20. Residues Asp-28, His-106, and 128–130 (YAN) contribute to the substrate site.

The protein belongs to the RbsD / FucU family. RbsD subfamily. In terms of assembly, homodecamer.

The protein resides in the cytoplasm. It carries out the reaction beta-D-ribopyranose = beta-D-ribofuranose. Its pathway is carbohydrate metabolism; D-ribose degradation; D-ribose 5-phosphate from beta-D-ribopyranose: step 1/2. Catalyzes the interconversion of beta-pyran and beta-furan forms of D-ribose. In Aliivibrio fischeri (strain ATCC 700601 / ES114) (Vibrio fischeri), this protein is D-ribose pyranase.